The primary structure comprises 506 residues: Ubiquitin carboxyl-terminal hydrolase 22 (506 aa).

The UBP-type zinc finger occupies Ala4 to Leu121. Residues Cys6, His8, Cys46, Cys49, Cys59, Cys62, Cys67, His72, His76, His82, Cys95, and Cys98 each coordinate Zn(2+). Residues Arg159–Gln501 enclose the USP domain. Cys168 acts as the Nucleophile in catalysis. Catalysis depends on His460, which acts as the Proton acceptor.

The protein belongs to the peptidase C19 family. UBP8 subfamily. As to quaternary structure, component of some SAGA transcription coactivator-HAT complexes.

It localises to the nucleus. It carries out the reaction Thiol-dependent hydrolysis of ester, thioester, amide, peptide and isopeptide bonds formed by the C-terminal Gly of ubiquitin (a 76-residue protein attached to proteins as an intracellular targeting signal).. In terms of biological role, histone deubiquitinating component of the transcription regulatory histone acetylation (HAT) complex SAGA. Catalyzes the deubiquitination of both histones H2A and H2B, thereby acting as a coactivator. Recruited to specific gene promoters by activators, where it is required for transcription. This Danio rerio (Zebrafish) protein is Ubiquitin carboxyl-terminal hydrolase 22 (usp22).